The chain runs to 291 residues: 4-hydroxy-tetrahydrodipicolinate synthase (291 aa).

Threonine 45 provides a ligand contact to pyruvate. Residue tyrosine 133 is the Proton donor/acceptor of the active site. Residue lysine 161 is the Schiff-base intermediate with substrate of the active site. Isoleucine 203 is a binding site for pyruvate.

It belongs to the DapA family. In terms of assembly, homotetramer.

The protein localises to the cytoplasm. The enzyme catalyses L-aspartate 4-semialdehyde + pyruvate = (2S,4S)-4-hydroxy-2,3,4,5-tetrahydrodipicolinate + H2O + H(+). Its pathway is amino-acid biosynthesis; L-lysine biosynthesis via DAP pathway; (S)-tetrahydrodipicolinate from L-aspartate: step 3/4. With respect to regulation, is allosterically feedback inhibited by lysine; the N.meningitidis enzyme is significantly more sensitive to lysine than the E.coli enzyme. Shows substrate inhibition by (S)-ASA, with a Ki of 1.7 mM. In terms of biological role, catalyzes the condensation of (S)-aspartate-beta-semialdehyde [(S)-ASA] and pyruvate to 4-hydroxy-tetrahydrodipicolinate (HTPA). The sequence is that of 4-hydroxy-tetrahydrodipicolinate synthase from Neisseria meningitidis serogroup B (strain ATCC BAA-335 / MC58).